Reading from the N-terminus, the 506-residue chain is U3 small nucleolar RNA-associated protein 18 homolog (506 aa).

The segment covering 1 to 11 has biased composition (acidic residues); the sequence is MSSDESSDGLE. Disordered stretches follow at residues 1-44 and 69-126; these read MSSD…SQAK and AKSV…PLNH. The span at 24 to 37 shows a compositional bias: basic and acidic residues; that stretch reads EQEKPAKIKRERYI. Phosphoserine is present on residues Ser102, Ser104, Ser164, and Ser165. WD repeat units follow at residues 203–242, 331–370, 372–413, and 469–505; these read YAEGNATSIQFHPTSTAALVAGMNGLATIYAVDGQKNERL, KQEGKVKGFTWSSDSKRILVCGSTSNVSVLNLRQNLIEHI, MDDG…ASKA, and EKVGFVTSMAFSPHSSFLAFATKGKQVPLFRLKYFKG.

This sequence belongs to the WD repeat UTP18 family. Component of U3 snoRNP complex.

It is found in the nucleus. The protein resides in the nucleolus. Its function is as follows. Component of a nucleolar small nuclear ribonucleoprotein particle (snoRNP) thought to participate in the processing and modification of pre-ribosomal RNA. Regulation of cell size by ribosome synthesis is an important parameter for stem cell maintenance and function. This chain is U3 small nucleolar RNA-associated protein 18 homolog (wcd), found in Drosophila melanogaster (Fruit fly).